Reading from the N-terminus, the 195-residue chain is Imidazoleglycerol-phosphate dehydratase (195 aa).

This sequence belongs to the imidazoleglycerol-phosphate dehydratase family.

The protein localises to the cytoplasm. The catalysed reaction is D-erythro-1-(imidazol-4-yl)glycerol 3-phosphate = 3-(imidazol-4-yl)-2-oxopropyl phosphate + H2O. It participates in amino-acid biosynthesis; L-histidine biosynthesis; L-histidine from 5-phospho-alpha-D-ribose 1-diphosphate: step 6/9. The sequence is that of Imidazoleglycerol-phosphate dehydratase from Jannaschia sp. (strain CCS1).